Consider the following 789-residue polypeptide: Polyribonucleotide nucleotidyltransferase (789 aa).

Mg(2+) contacts are provided by Asp494 and Asp500. One can recognise a KH domain in the interval 561–620 (PRIESIFINKDKIRNVIGSGGKNIREICEKTGARVEIMQDGTVMIYAINNDAVEYAKNMI). The region spanning 630–697 (GKVFDGTVIE…DREYVQLSMR (68 aa)) is the S1 motif domain. The interval 709–789 (GELYNIRKTN…NEVPRKPRFF (81 aa)) is disordered. Residues 737-749 (SEKKRRGSGRSRR) show a composition bias toward basic residues. Residues 763 to 780 (NNGFGNGNRSFNDNRNGN) are compositionally biased toward low complexity.

The protein belongs to the polyribonucleotide nucleotidyltransferase family. The cofactor is Mg(2+).

It is found in the cytoplasm. It catalyses the reaction RNA(n+1) + phosphate = RNA(n) + a ribonucleoside 5'-diphosphate. In terms of biological role, involved in mRNA degradation. Catalyzes the phosphorolysis of single-stranded polyribonucleotides processively in the 3'- to 5'-direction. In Ehrlichia ruminantium (strain Gardel), this protein is Polyribonucleotide nucleotidyltransferase.